A 498-amino-acid chain; its full sequence is Ribulose bisphosphate carboxylase large chain (498 aa).

Positions 1 to 2 are excised as a propeptide; it reads MS. P3 carries the N-acetylproline modification. Position 14 is an N6,N6,N6-trimethyllysine (K14). The substrate site is built by N123 and T173. The active-site Proton acceptor is the K175. K177 is a binding site for substrate. 3 residues coordinate Mg(2+): K201, D203, and E204. The residue at position 201 (K201) is an N6-carboxylysine. H294 acts as the Proton acceptor in catalysis. Substrate contacts are provided by R295, H327, and S379. Positions 471 to 498 are disordered; that stretch reads PVDTLDPNDKKQRDNEDTLADKLFGDKG.

It belongs to the RuBisCO large chain family. Type I subfamily. Heterohexadecamer of 8 large chains and 8 small chains; disulfide-linked. The disulfide link is formed within the large subunit homodimers. It depends on Mg(2+) as a cofactor. Post-translationally, the disulfide bond which can form in the large chain dimeric partners within the hexadecamer appears to be associated with oxidative stress and protein turnover.

The protein localises to the plastid. The enzyme catalyses 2 (2R)-3-phosphoglycerate + 2 H(+) = D-ribulose 1,5-bisphosphate + CO2 + H2O. It carries out the reaction D-ribulose 1,5-bisphosphate + O2 = 2-phosphoglycolate + (2R)-3-phosphoglycerate + 2 H(+). Functionally, ruBisCO catalyzes two reactions: the carboxylation of D-ribulose 1,5-bisphosphate, the primary event in carbon dioxide fixation, as well as the oxidative fragmentation of the pentose substrate in the photorespiration process. Both reactions occur simultaneously and in competition at the same active site. The polypeptide is Ribulose bisphosphate carboxylase large chain (rbcL) (Cuscuta reflexa (Southern Asian dodder)).